Here is a 1114-residue protein sequence, read N- to C-terminus: Kinesin-like protein KIN-12F (1114 aa).

The tract at residues 1–84 (MADNRIAGSL…RSQVSASRPR (84 aa)) is disordered. Composition is skewed to polar residues over residues 10–39 (LPTSSKWSFLPKSVSSHFKPSSNPRSSNPD) and 48–80 (PNIHNPRNQSVSSKSTAYKNQMDSPNCRSQVSA). The Kinesin motor domain occupies 104–436 (HVKVVVRIKP…LRFGERAKAM (333 aa)). Position 175 to 182 (175 to 182 (GQNGSGKT)) interacts with ATP. 3 coiled-coil regions span residues 761 to 791 (QQELEKLCSEQAAKIEQLTRLVGQHKLQTED), 872 to 942 (ARSF…LRRA), and 1038 to 1081 (EVLV…HKLE). Positions 1092 to 1114 (NTLPESALQPLHQRNSAIEEEGM) are disordered.

The protein belongs to the TRAFAC class myosin-kinesin ATPase superfamily. Kinesin family. KIN-12 subfamily.

The polypeptide is Kinesin-like protein KIN-12F (Arabidopsis thaliana (Mouse-ear cress)).